The following is a 394-amino-acid chain: Elongation factor Tu (394 aa).

The tr-type G domain maps to lysine 10–valine 204. Residues glycine 19–threonine 26 form a G1 region. Glycine 19–threonine 26 is a GTP binding site. Threonine 26 lines the Mg(2+) pocket. Residues glycine 60–lysine 64 are G2. The G3 stretch occupies residues aspartate 81–glycine 84. GTP contacts are provided by residues aspartate 81 to histidine 85 and asparagine 136 to aspartate 139. Residues asparagine 136 to aspartate 139 are G4. The G5 stretch occupies residues serine 174 to leucine 176.

The protein belongs to the TRAFAC class translation factor GTPase superfamily. Classic translation factor GTPase family. EF-Tu/EF-1A subfamily. In terms of assembly, monomer.

The protein resides in the cytoplasm. It catalyses the reaction GTP + H2O = GDP + phosphate + H(+). GTP hydrolase that promotes the GTP-dependent binding of aminoacyl-tRNA to the A-site of ribosomes during protein biosynthesis. The polypeptide is Elongation factor Tu (Aster yellows witches'-broom phytoplasma (strain AYWB)).